A 232-amino-acid polypeptide reads, in one-letter code: Megakaryocyte and platelet inhibitory receptor G6b (232 aa).

Positions methionine 1–glycine 17 are cleaved as a signal peptide. The Extracellular segment spans residues asparagine 18–lysine 140. Asparagine 32 and asparagine 112 each carry an N-linked (GlcNAc...) asparagine glycan. The helical transmembrane segment at valine 141–tryptophan 161 threads the bilayer. At tryptophan 162 to valine 232 the chain is on the cytoplasmic side. Short sequence motifs (ITIM motif) lie at residues leucine 200 to leucine 205 and threonine 226 to valine 231. Tyrosine 202 is subject to Phosphotyrosine.

As to quaternary structure, interacts (via ITIM motif) with PTPN6 and PTPN11. Binds to heparin. Post-translationally, N-glycosylated. May be O-glycosylated. In terms of processing, phosphorylated.

It is found in the cell membrane. Its function is as follows. Inhibitory receptor that acts as a critical regulator of hematopoietic lineage differentiation, megakaryocyte function and platelet production. Inhibits platelet aggregation and activation by agonists such as ADP and collagen-related peptide. This regulation of megakaryocate function as well as platelet production ann activation is done through the inhibition (via the 2 ITIM motifs) of the receptors CLEC1B and GP6:FcRgamma signaling. Appears to operate in a calcium-independent manner. This is Megakaryocyte and platelet inhibitory receptor G6b from Rattus norvegicus (Rat).